A 261-amino-acid polypeptide reads, in one-letter code: Cyclin-J18-like (261 aa).

Belongs to the cyclin family.

This is Cyclin-J18-like from Oryza sativa subsp. japonica (Rice).